The following is a 220-amino-acid chain: Imidazoleglycerol-phosphate dehydratase (220 aa).

This sequence belongs to the imidazoleglycerol-phosphate dehydratase family.

It carries out the reaction D-erythro-1-(imidazol-4-yl)glycerol 3-phosphate = 3-(imidazol-4-yl)-2-oxopropyl phosphate + H2O. It functions in the pathway amino-acid biosynthesis; L-histidine biosynthesis; L-histidine from 5-phospho-alpha-D-ribose 1-diphosphate: step 6/9. The sequence is that of Imidazoleglycerol-phosphate dehydratase (HIS3) from Eremothecium gossypii (strain ATCC 10895 / CBS 109.51 / FGSC 9923 / NRRL Y-1056) (Yeast).